The sequence spans 251 residues: 3-deoxy-manno-octulosonate cytidylyltransferase (251 aa).

The protein belongs to the KdsB family.

It is found in the cytoplasm. The enzyme catalyses 3-deoxy-alpha-D-manno-oct-2-ulosonate + CTP = CMP-3-deoxy-beta-D-manno-octulosonate + diphosphate. The protein operates within nucleotide-sugar biosynthesis; CMP-3-deoxy-D-manno-octulosonate biosynthesis; CMP-3-deoxy-D-manno-octulosonate from 3-deoxy-D-manno-octulosonate and CTP: step 1/1. It participates in bacterial outer membrane biogenesis; lipopolysaccharide biosynthesis. Functionally, activates KDO (a required 8-carbon sugar) for incorporation into bacterial lipopolysaccharide in Gram-negative bacteria. The protein is 3-deoxy-manno-octulosonate cytidylyltransferase of Vibrio parahaemolyticus serotype O3:K6 (strain RIMD 2210633).